We begin with the raw amino-acid sequence, 125 residues long: Small ribosomal subunit protein uS13 (125 aa).

The protein belongs to the universal ribosomal protein uS13 family. As to quaternary structure, part of the 30S ribosomal subunit. Forms a loose heterodimer with protein S19. Forms two bridges to the 50S subunit in the 70S ribosome.

Located at the top of the head of the 30S subunit, it contacts several helices of the 16S rRNA. In the 70S ribosome it contacts the 23S rRNA (bridge B1a) and protein L5 of the 50S subunit (bridge B1b), connecting the 2 subunits; these bridges are implicated in subunit movement. Contacts the tRNAs in the A and P-sites. The chain is Small ribosomal subunit protein uS13 from Rickettsia akari (strain Hartford).